Here is a 225-residue protein sequence, read N- to C-terminus: Adenylate kinase (225 aa).

10 to 15 (GSGKGT) serves as a coordination point for ATP. The segment at 30 to 59 (ESGAIFRENISKGTEIGKKAKEYIDRGDLV) is NMP. AMP-binding positions include Ser31, Arg36, 57-59 (DLV), 85-88 (GFPR), and Gln92. The LID stretch occupies residues 126–165 (GRRLCENDNNHPNNIFIDAIKPDGDKCRVCGGALSARSDD). Arg127 is a binding site for ATP. Arg162 and Arg174 together coordinate AMP. Pro211 serves as a coordination point for ATP.

The protein belongs to the adenylate kinase family. In terms of assembly, monomer.

Its subcellular location is the cytoplasm. It carries out the reaction AMP + ATP = 2 ADP. The protein operates within purine metabolism; AMP biosynthesis via salvage pathway; AMP from ADP: step 1/1. In terms of biological role, catalyzes the reversible transfer of the terminal phosphate group between ATP and AMP. Plays an important role in cellular energy homeostasis and in adenine nucleotide metabolism. This Desulfatibacillum aliphaticivorans protein is Adenylate kinase.